A 460-amino-acid polypeptide reads, in one-letter code: Ribosomal protein uS12 methylthiotransferase RimO (460 aa).

Residues 17-128 (PAVAVLHLGC…IVQVIQRAER (112 aa)) form the MTTase N-terminal domain. C26, C62, C91, C166, C170, and C173 together coordinate [4Fe-4S] cluster. The Radical SAM core domain occupies 152–381 (TTHAPVAYLR…MQLQQGIAFR (230 aa)). The TRAM domain occupies 384–450 (REQVGQVVPV…PYDLFGQVVE (67 aa)).

It belongs to the methylthiotransferase family. RimO subfamily. It depends on [4Fe-4S] cluster as a cofactor.

It is found in the cytoplasm. The catalysed reaction is L-aspartate(89)-[ribosomal protein uS12]-hydrogen + (sulfur carrier)-SH + AH2 + 2 S-adenosyl-L-methionine = 3-methylsulfanyl-L-aspartate(89)-[ribosomal protein uS12]-hydrogen + (sulfur carrier)-H + 5'-deoxyadenosine + L-methionine + A + S-adenosyl-L-homocysteine + 2 H(+). In terms of biological role, catalyzes the methylthiolation of an aspartic acid residue of ribosomal protein uS12. The polypeptide is Ribosomal protein uS12 methylthiotransferase RimO (Synechococcus sp. (strain JA-3-3Ab) (Cyanobacteria bacterium Yellowstone A-Prime)).